Consider the following 954-residue polypeptide: Valine--tRNA ligase (954 aa).

The 'HIGH' region signature appears at 48 to 58; it reads PNVTGSLHMGH. A 'KMSKS' region motif is present at residues 560-564; sequence KMSKS. K563 serves as a coordination point for ATP. Residues 883-954 adopt a coiled-coil conformation; that stretch reads AGFINKEAEL…QTQYQAIENL (72 aa).

The protein belongs to the class-I aminoacyl-tRNA synthetase family. ValS type 1 subfamily. As to quaternary structure, monomer.

It localises to the cytoplasm. The catalysed reaction is tRNA(Val) + L-valine + ATP = L-valyl-tRNA(Val) + AMP + diphosphate. Functionally, catalyzes the attachment of valine to tRNA(Val). As ValRS can inadvertently accommodate and process structurally similar amino acids such as threonine, to avoid such errors, it has a 'posttransfer' editing activity that hydrolyzes mischarged Thr-tRNA(Val) in a tRNA-dependent manner. This Actinobacillus pleuropneumoniae serotype 3 (strain JL03) protein is Valine--tRNA ligase.